The sequence spans 216 residues: MAAKGLLVMDVDSTLIEEEVIDLLGEKAGMGDKISEITAAAMSGEIDFKESLRERVALLSGLPTTIFDDVYKEIHLTKGATGLIETLHAKGWKVGLVSGGFHEIVDKIARDLKIDYVFANRLSVENGHLTGKTHGTVVDKDFKVDRLKQWANENKLNLSEVIAVGDGANDIPMLNTAGIGIAFCAKPAVKAAVSYHIDKRNLLTVLEFVDKLADKE.

The active-site Nucleophile is aspartate 10. Mg(2+) is bound by residues aspartate 10 and aspartate 12. Aspartate 12 serves as the catalytic Proton donor. Residues glutamate 19, arginine 55, 98 to 99, and lysine 143 each bind substrate; that span reads SG. Aspartate 166 lines the Mg(2+) pocket. Position 169 (asparagine 169) interacts with substrate.

Belongs to the HAD-like hydrolase superfamily. SerB family. It depends on Mg(2+) as a cofactor.

It catalyses the reaction O-phospho-L-serine + H2O = L-serine + phosphate. It carries out the reaction O-phospho-D-serine + H2O = D-serine + phosphate. It functions in the pathway amino-acid biosynthesis; L-serine biosynthesis; L-serine from 3-phospho-D-glycerate: step 3/3. This chain is Phosphoserine phosphatase, found in Lactococcus lactis subsp. lactis (strain IL1403) (Streptococcus lactis).